Reading from the N-terminus, the 819-residue chain is Leucine--tRNA ligase (819 aa).

Residues 42–52 (PYPSGRLHMGH) carry the 'HIGH' region motif. A 'KMSKS' region motif is present at residues 576–580 (KMSKS). K579 contacts ATP.

It belongs to the class-I aminoacyl-tRNA synthetase family.

The protein resides in the cytoplasm. It carries out the reaction tRNA(Leu) + L-leucine + ATP = L-leucyl-tRNA(Leu) + AMP + diphosphate. This chain is Leucine--tRNA ligase, found in Nitrosococcus oceani (strain ATCC 19707 / BCRC 17464 / JCM 30415 / NCIMB 11848 / C-107).